Consider the following 1412-residue polypeptide: ABC transporter C family member 3 (1412 aa).

The tract at residues 1-34 is disordered; that stretch reads MELEEVGVEANQPNNDQGSKKQNKNKDKKVKKEK. The segment covering 21-34 has biased composition (basic residues); it reads KQNKNKDKKVKKEK. Transmembrane regions (helical) follow at residues 115–135, 161–181, 236–256, 261–281, 346–366, and 379–399; these read FGLY…SQFV, MGYY…VCLY, VFQL…CLAL, IGWP…FNGI, AMLI…VFSS, and IFAA…LPII. One can recognise an ABC transmembrane type-1 1 domain in the interval 119–405; that stretch reads FVLSWFFYAI…LPIIVALGIQ (287 aa). The ABC transporter 1 domain maps to 439–662; sequence IRDATLTWNQ…QKEFSGLLQA (224 aa). 474-481 is a binding site for ATP; that stretch reads GSVGSGKS. The next 5 helical transmembrane spans lie at 724–744, 787–807, 854–874, 875–895, and 967–987; these read WKYI…FFLM, IYIG…FLFF, NLMA…VATL, IIIS…CIIF, and WLGL…CLFI. The 291-residue stretch at 735–1025 folds into the ABC transmembrane type-1 2 domain; it reads FLMAFIFFLM…ATLQAADTET (291 aa). In terms of domain architecture, ABC transporter 2 spans 1062 to 1296; sequence ITFDNLVMRY…PAGLLNWLVE (235 aa). ATP is bound at residue 1096 to 1103; that stretch reads GRTGAGKS. The disordered stretch occupies residues 1316–1412; sequence GVNIDQITPP…DNDNSEAGDN (97 aa). A compositionally biased stretch (polar residues) spans 1342-1351; it reads NINSPPQQSL. Residues 1367 to 1397 are compositionally biased toward low complexity; it reads DNNNNNNNNNNNNNNNNNNNNNNNNNNNNND. The span at 1398–1412 shows a compositional bias: acidic residues; sequence NDNDNDNDNSEAGDN.

Belongs to the ABC transporter superfamily. ABCC family. Conjugate transporter (TC 3.A.1.208) subfamily.

The protein resides in the membrane. The chain is ABC transporter C family member 3 (abcC3) from Dictyostelium discoideum (Social amoeba).